Here is a 137-residue protein sequence, read N- to C-terminus: Leaf-specific thionin DB4 (137 aa).

The first 28 residues, 1-28 (MAPSKSIKSVVICVLILGLVLEQVQVEG), serve as a signal peptide directing secretion. Disulfide bonds link C31–C68, C32–C60, C40–C58, and C44–C54. Residues 75-137 (LNLLPESGEP…DGAVIQSVEA (63 aa)) constitute a propeptide, acidic domain.

The protein belongs to the plant thionin (TC 1.C.44) family. 4 C-C subfamily.

It is found in the secreted. In terms of biological role, thionins are small plant proteins which are toxic to animal cells. They seem to exert their toxic effect at the level of the cell membrane. Their precise function is not known. This Hordeum vulgare (Barley) protein is Leaf-specific thionin DB4 (THI1.3).